The sequence spans 666 residues: MTKEQASKLINDLRLKLNEWAKEYYVLDNPSVDDAEYDKTIHQLLDLENQFPELITSDSITQKVGGIVSDKFEKHTHKYPMLSLGDIFSWDEFINFNKQVAKVTGTENNEYTAELKIDGLSISLIYKDGVLQKGVTRGDGKVGENVTTNVKTIKSIPLSIPSKDEIEIRGEVFLGKKEFAKINEERLLNGDQLFANPRNAAAGTLRQLDSKIVAERNLDAYLYYYFNENNPINTQFDSINQIKNLGLKINKETKICKTLEEVKLYIEYYTEKRNELDYEIDGIVFKLNDKKLQEEVGYTAKTPKWAIAYKFPAEVKQTKLLDIFPTVGRTGKITYNAKLEPVQIAGTTVSAASLNNAEYIMAKDLRINSIVKVKKAGDIIPEVISAIKDEKFDLLPIWEKDVQCPACNELLEKTSTEVDQFCVNFNCPAQILRSLEHFASRGAANIVGLGGQTIKKLFEEKLITNIADIFKVEEHKENIINFEKFGEKSFENLIASIKESKNNSFEKTLFGLGIRHVGSKTALTLAQIYKNIDNLKNATYEELSSIDSVGEVLAMSIVDWFKIESNLQLINELKSFDVNFEYLGQAKNTESTISEKSFVITGTLSESRDYFKDIIELNNGKVIGSVSKKTDYVLAGENAGSKLTKAEELNVKVINEEEFFAILKGE.

Residues 34–38, 83–84, and Glu-114 each bind NAD(+); these read DAEYD and SL. Lys-116 serves as the catalytic N6-AMP-lysine intermediate. NAD(+) is bound by residues Arg-137, Glu-171, Lys-286, and Lys-310. Zn(2+) is bound by residues Cys-404, Cys-407, Cys-422, and Cys-427. In terms of domain architecture, BRCT spans 588 to 666; that stretch reads NTESTISEKS…EEFFAILKGE (79 aa).

It belongs to the NAD-dependent DNA ligase family. LigA subfamily. Mg(2+) is required as a cofactor. The cofactor is Mn(2+).

The catalysed reaction is NAD(+) + (deoxyribonucleotide)n-3'-hydroxyl + 5'-phospho-(deoxyribonucleotide)m = (deoxyribonucleotide)n+m + AMP + beta-nicotinamide D-nucleotide.. Its function is as follows. DNA ligase that catalyzes the formation of phosphodiester linkages between 5'-phosphoryl and 3'-hydroxyl groups in double-stranded DNA using NAD as a coenzyme and as the energy source for the reaction. It is essential for DNA replication and repair of damaged DNA. This Mesoplasma florum (strain ATCC 33453 / NBRC 100688 / NCTC 11704 / L1) (Acholeplasma florum) protein is DNA ligase.